The chain runs to 70 residues: Putative membrane protein insertion efficiency factor (70 aa).

This sequence belongs to the UPF0161 family.

Its subcellular location is the cell membrane. In terms of biological role, could be involved in insertion of integral membrane proteins into the membrane. The polypeptide is Putative membrane protein insertion efficiency factor (Clostridium novyi (strain NT)).